A 210-amino-acid polypeptide reads, in one-letter code: Scoloptoxin SSD558 (210 aa).

A signal peptide spans 1–23; sequence MNILLPSTLFVLLMFQIIGSGMG.

Contains 3 disulfide bonds. In terms of tissue distribution, expressed by the venom gland.

Its subcellular location is the secreted. The protein is Scoloptoxin SSD558 of Scolopendra dehaani (Thai centipede).